We begin with the raw amino-acid sequence, 1466 residues long: ABC transporter G family member 40 (1466 aa).

Residues 1–21 are disordered; that stretch reads MSHRHHAALVASASGRSPSWG. The region spanning 176–449 is the ABC transporter 1 domain; it reads GLIGQFGSSN…FEASGFRCPQ (274 aa). Position 209-216 (209-216) interacts with ATP; sequence GPPSSGKS. The 214-residue stretch at 527 to 740 folds into the ABC transmembrane type-2 1 domain; it reads ESLKAVLCRE…SQNAISINEF (214 aa). 6 consecutive transmembrane segments (helical) span residues 545–565, 581–601, 633–653, 664–684, 690–710, and 776–796; these read FLYIFKVTQLIILAFLSMTVF, FLGALTFNLITVMFNGLSELN, VPVSLVEATVWVVITYYVMGF, FLAFFVTHLMAMALFRFLGAI, IAISFGMLVLLIVFVFGGFVI, and FWLSIGALVGFIILFNTLYIL. Positions 821-831 are enriched in basic and acidic residues; that stretch reads YTETRNEEHRS. Residues 821–851 are disordered; sequence YTETRNEEHRSRTSTTTSSIPTSANGEGNRP. The segment covering 833–843 has biased composition (low complexity); sequence TSTTTSSIPTS. Positions 865–1117 constitute an ABC transporter 2 domain; that stretch reads LCFNHLNYYV…KLVEYFETIL (253 aa). 910 to 917 serves as a coordination point for ATP; that stretch reads GVSGAGKT. An ABC transmembrane type-2 2 domain is found at 1190–1404; it reads IQCVANLWKQ…TIYGVIASQF (215 aa). The next 7 membrane-spanning stretches (helical) occupy residues 1209-1229, 1241-1261, 1297-1317, 1327-1347, 1355-1375, 1396-1416, and 1435-1455; these read YNSLRYLTTFLYGLFFGTVFW, LYNLLGATYAAIFFIGATNCM, FIYNIIQGILYTVIIYAMIGY, FLFFIVSSFNYFTFFGMMLVA, ANILITFALPLWNLFAGFLIF, IYGVIASQFGGNGGSISVPGG, and FLGYVILAHFGFMAAFVLIFG.

It belongs to the ABC transporter superfamily. ABCG family. PDR (TC 3.A.1.205) subfamily.

Its subcellular location is the membrane. The sequence is that of ABC transporter G family member 40 from Oryza sativa subsp. japonica (Rice).